The primary structure comprises 172 residues: NAD(P)H-quinone oxidoreductase subunit J (172 aa).

It belongs to the complex I 30 kDa subunit family. In terms of assembly, NDH-1 can be composed of about 15 different subunits; different subcomplexes with different compositions have been identified which probably have different functions.

Its subcellular location is the cellular thylakoid membrane. The catalysed reaction is a plastoquinone + NADH + (n+1) H(+)(in) = a plastoquinol + NAD(+) + n H(+)(out). It catalyses the reaction a plastoquinone + NADPH + (n+1) H(+)(in) = a plastoquinol + NADP(+) + n H(+)(out). NDH-1 shuttles electrons from an unknown electron donor, via FMN and iron-sulfur (Fe-S) centers, to quinones in the respiratory and/or the photosynthetic chain. The immediate electron acceptor for the enzyme in this species is believed to be plastoquinone. Couples the redox reaction to proton translocation, and thus conserves the redox energy in a proton gradient. Cyanobacterial NDH-1 also plays a role in inorganic carbon-concentration. This is NAD(P)H-quinone oxidoreductase subunit J from Synechococcus sp. (strain ATCC 27144 / PCC 6301 / SAUG 1402/1) (Anacystis nidulans).